A 63-amino-acid polypeptide reads, in one-letter code: Small ribosomal subunit protein eS17 (63 aa).

This sequence belongs to the eukaryotic ribosomal protein eS17 family.

In Methanosphaerula palustris (strain ATCC BAA-1556 / DSM 19958 / E1-9c), this protein is Small ribosomal subunit protein eS17.